The chain runs to 510 residues: MRLTYLPLFAGIAIQSASALPDFFKSSVLKPRRTNSLLINPDAQPDLPTAQQASTAAASVGLNLTDIQGDILIGMKKNKEMFFFFSIADATAFKSHLDSAILPLITSTQQLLTVATQPTTAVNLAFSQTGLNALGLASQGLGDSLFASGQFSGAESLGDPGTSNWVQAFAGTGIHGVFLLASDTIDNVNAELSQIQSILGTSITEAYRLQGEARPDDQQGHEHFGFMDGISNPAIDGFSTALPGQAVLSPGLFLLAEDGDGSSSSRPSWAKDGSLLAFRQLQQRVPEFNKFLADNAALTQGNADLLGARMMGRWKSGAPVDLAPTADDVDLANDPQRNNNFNFTHPDFTETTDQTHCPFSAHIRKTNPRSDFNPLNTANHIIRAGIPYGPEVTDAEASSNTSSTDASLERGLAFVAYQSNIGNGFAFIQQNWVDNANFFFGKTTPPGIDPIIGSNAAQNNFAPNSPRPVSGLDPTDSTTIVTLNTDFVVSRGGEYFFSPSLSAIQNTLSV.

The first 19 residues, 1 to 19 (MRLTYLPLFAGIAIQSASA), serve as a signal peptide directing secretion. The propeptide occupies 20-58 (LPDFFKSSVLKPRRTNSLLINPDAQPDLPTAQQASTAAA). The active-site Proton acceptor is Asp228. Heme is bound at residue His362.

As to quaternary structure, homodimer. Heme b serves as cofactor.

Peroxidase capable of degrading beta-carotene. This chain is Peroxidase 2, found in Mycetinis scorodonius (Garlic mushroom).